We begin with the raw amino-acid sequence, 428 residues long: Sorting nexin-31 (428 aa).

Residues 1–107 (MHICIPVTEE…EYFKKLQMDT (107 aa)) form the PX domain.

It belongs to the sorting nexin family.

In terms of biological role, may be involved in protein trafficking. The sequence is that of Sorting nexin-31 (snx31) from Xenopus tropicalis (Western clawed frog).